A 409-amino-acid polypeptide reads, in one-letter code: Serine/threonine transporter SstT (409 aa).

Helical transmembrane passes span 24-44 (LALG…AGLF), 48-68 (FVGA…AATI), 82-102 (IIVL…IAGM), 142-162 (AIAN…GAAL), 194-214 (LGIF…ALAG), 218-238 (LLAV…PAIV), 292-312 (IPLG…VLAM), and 319-339 (GITV…VSAC).

It belongs to the dicarboxylate/amino acid:cation symporter (DAACS) (TC 2.A.23) family.

Its subcellular location is the cell inner membrane. It catalyses the reaction L-serine(in) + Na(+)(in) = L-serine(out) + Na(+)(out). The enzyme catalyses L-threonine(in) + Na(+)(in) = L-threonine(out) + Na(+)(out). Functionally, involved in the import of serine and threonine into the cell, with the concomitant import of sodium (symport system). The chain is Serine/threonine transporter SstT from Neisseria meningitidis serogroup B (strain ATCC BAA-335 / MC58).